Here is a 277-residue protein sequence, read N- to C-terminus: Ras suppressor protein 1 (277 aa).

A disordered region spans residues 1-23 (MSKSLKKLVEESREKNQPEVDMS). Ser2 carries the N-acetylserine modification. Over residues 7 to 23 (KLVEESREKNQPEVDMS) the composition is skewed to basic and acidic residues. 7 LRR repeats span residues 41–63 (HITQ…AELK), 64–85 (NLEV…ISSL), 87–108 (KLKH…FGSS), 110–133 (LLEV…FFYL), 135–156 (TLRA…IGKL), 158–179 (KLQI…IGEL), and 181–202 (QLKE…LGNL). The segment at 250–277 (MQANPEPPKKNNDKSKKISRKPLAAKNK) is disordered. Residues 256-265 (PPKKNNDKSK) show a composition bias toward basic and acidic residues.

Potentially plays a role in the Ras signal transduction pathway. Capable of suppressing v-Ras transformation in vitro. The chain is Ras suppressor protein 1 (Rsu1) from Mus musculus (Mouse).